A 310-amino-acid polypeptide reads, in one-letter code: Probable cell division protein WhiA (310 aa).

Positions 274–308 (SLKELGTLVPGGPISKSGINHRLRKINQFAEQLQK) form a DNA-binding region, H-T-H motif.

It belongs to the WhiA family.

Its function is as follows. Involved in cell division and chromosome segregation. In Lactiplantibacillus plantarum (strain ATCC BAA-793 / NCIMB 8826 / WCFS1) (Lactobacillus plantarum), this protein is Probable cell division protein WhiA.